The chain runs to 221 residues: PKHD-type hydroxylase P9515_13321 (221 aa).

In terms of domain architecture, Fe2OG dioxygenase spans 80–174; the sequence is TIHGIMFTKS…RLVCVGWIES (95 aa). Residues H98, D100, and H155 each contribute to the Fe cation site. 2-oxoglutarate is bound at residue R165.

The cofactor is Fe(2+). L-ascorbate serves as cofactor.

The sequence is that of PKHD-type hydroxylase P9515_13321 from Prochlorococcus marinus (strain MIT 9515).